The primary structure comprises 168 residues: Ribosome maturation factor RimM (168 aa).

In terms of domain architecture, PRC barrel spans 95–168; sequence EEGYYWSDLI…RITVDWGLDY (74 aa).

This sequence belongs to the RimM family. Binds ribosomal protein uS19.

It localises to the cytoplasm. In terms of biological role, an accessory protein needed during the final step in the assembly of 30S ribosomal subunit, possibly for assembly of the head region. Essential for efficient processing of 16S rRNA. May be needed both before and after RbfA during the maturation of 16S rRNA. It has affinity for free ribosomal 30S subunits but not for 70S ribosomes. The chain is Ribosome maturation factor RimM from Nitrosospira multiformis (strain ATCC 25196 / NCIMB 11849 / C 71).